A 548-amino-acid chain; its full sequence is Membrane protein insertase YidC (548 aa).

A helical transmembrane segment spans residues 6–26 (NLLIIALLFVSFMIWQAWEQD). A disordered region spans residues 28-52 (NPQPQQQTTQTTTTAAGSAADQGVP). The segment covering 29–41 (PQPQQQTTQTTTT) has biased composition (low complexity). 4 helical membrane-spanning segments follow: residues 345 to 365 (KFIH…TFIV), 420 to 440 (LGGC…YYML), 458 to 478 (LSAQ…MFFI), and 499 to 519 (PVIF…YYIV).

It belongs to the OXA1/ALB3/YidC family. Type 1 subfamily. In terms of assembly, interacts with the Sec translocase complex via SecD. Specifically interacts with transmembrane segments of nascent integral membrane proteins during membrane integration.

The protein localises to the cell inner membrane. Functionally, required for the insertion and/or proper folding and/or complex formation of integral membrane proteins into the membrane. Involved in integration of membrane proteins that insert both dependently and independently of the Sec translocase complex, as well as at least some lipoproteins. Aids folding of multispanning membrane proteins. The protein is Membrane protein insertase YidC of Klebsiella pneumoniae (strain 342).